A 351-amino-acid chain; its full sequence is V-type proton ATPase subunit d2 (351 aa).

This sequence belongs to the V-ATPase V0D/AC39 subunit family. V-ATPase is a heteromultimeric enzyme composed of a peripheral catalytic V1 complex (components A to H) attached to an integral membrane V0 proton pore complex (components: a, c, c'', d and e).

The protein resides in the vacuole membrane. Subunit of the integral membrane V0 complex of vacuolar ATPase. Vacuolar ATPase is responsible for acidifying a variety of intracellular compartments in eukaryotic cells, thus providing most of the energy required for transport processes in the vacuolar system. This chain is V-type proton ATPase subunit d2 (VHA-d2), found in Arabidopsis thaliana (Mouse-ear cress).